Consider the following 314-residue polypeptide: Olfactory receptor 5P68 (314 aa).

The Extracellular segment spans residues M1 to V28. Residue N8 is glycosylated (N-linked (GlcNAc...) asparagine). The chain crosses the membrane as a helical span at residues I29–I49. Residues L50–Q57 are Cytoplasmic-facing. A helical transmembrane segment spans residues L58–S78. The Extracellular portion of the chain corresponds to S79–I102. C100 and C192 are joined by a disulfide. A helical transmembrane segment spans residues Q103–Y123. Residues D124–S136 are Cytoplasmic-facing. Residues T137 to L157 traverse the membrane as a helical segment. The Extracellular segment spans residues N158–E199. Residues V200 to S220 traverse the membrane as a helical segment. Residues Y221–A240 are Cytoplasmic-facing. A helical transmembrane segment spans residues F241 to I261. Residues Y262 to N274 lie on the Extracellular side of the membrane. The helical transmembrane segment at K275–L295 threads the bilayer. Over R296–S314 the chain is Cytoplasmic.

Belongs to the G-protein coupled receptor 1 family.

The protein resides in the cell membrane. In terms of biological role, potential odorant receptor. The polypeptide is Olfactory receptor 5P68 (Mus musculus (Mouse)).